We begin with the raw amino-acid sequence, 368 residues long: Quinolinate synthase (368 aa).

Positions 46 and 63 each coordinate iminosuccinate. Residue C110 participates in [4Fe-4S] cluster binding. Iminosuccinate contacts are provided by residues Y141–N143 and S162. C230 contributes to the [4Fe-4S] cluster binding site. Residues H256–E258 and T273 contribute to the iminosuccinate site. A [4Fe-4S] cluster-binding site is contributed by C320.

The protein belongs to the quinolinate synthase family. Type 3 subfamily. [4Fe-4S] cluster is required as a cofactor.

It localises to the cytoplasm. It carries out the reaction iminosuccinate + dihydroxyacetone phosphate = quinolinate + phosphate + 2 H2O + H(+). Its pathway is cofactor biosynthesis; NAD(+) biosynthesis; quinolinate from iminoaspartate: step 1/1. In terms of biological role, catalyzes the condensation of iminoaspartate with dihydroxyacetone phosphate to form quinolinate. The chain is Quinolinate synthase from Bacillus thuringiensis (strain Al Hakam).